The sequence spans 157 residues: Class 10 plant pathogenesis-related protein 2F (157 aa).

A trans-zeatin-binding site is contributed by Asp-8. Residues Pro-32, Val-35, and Ile-38 each contribute to the Ca(2+) site. Trans-zeatin contacts are provided by Glu-60, His-69, Tyr-81, and Tyr-83.

Belongs to the BetVI family.

Its subcellular location is the cytoplasm. It is found in the cytosol. In terms of biological role, class II ribonuclease (RNase). Binds to cytokinins. Interacts with melatonin. The protein is Class 10 plant pathogenesis-related protein 2F of Lupinus luteus (European yellow lupine).